The primary structure comprises 134 residues: Fluoride-specific ion channel FluC 2 (134 aa).

4 consecutive transmembrane segments (helical) span residues 10-30 (LSAE…GALL), 43-63 (LLVN…PAAP), 67-87 (LLVG…MVDA), and 100-120 (FGLI…GFWL). Positions 75 and 78 each coordinate Na(+).

This sequence belongs to the fluoride channel Fluc/FEX (TC 1.A.43) family.

The protein localises to the cell inner membrane. The enzyme catalyses fluoride(in) = fluoride(out). With respect to regulation, na(+) is not transported, but it plays an essential structural role and its presence is essential for fluoride channel function. Its function is as follows. Fluoride-specific ion channel. Important for reducing fluoride concentration in the cell, thus reducing its toxicity. In Synechococcus sp. (strain CC9902), this protein is Fluoride-specific ion channel FluC 2.